The sequence spans 360 residues: tRNA-specific 2-thiouridylase MnmA (360 aa).

Residues 9–16 (AMSGGVDS) and Leu35 contribute to the ATP site. Residue Cys104 is the Nucleophile of the active site. A disulfide bond links Cys104 and Cys197. Gly128 contributes to the ATP binding site. The interval 147 to 149 (KDQ) is interaction with tRNA. Cys197 acts as the Cysteine persulfide intermediate in catalysis.

Belongs to the MnmA/TRMU family.

It localises to the cytoplasm. It carries out the reaction S-sulfanyl-L-cysteinyl-[protein] + uridine(34) in tRNA + AH2 + ATP = 2-thiouridine(34) in tRNA + L-cysteinyl-[protein] + A + AMP + diphosphate + H(+). Functionally, catalyzes the 2-thiolation of uridine at the wobble position (U34) of tRNA, leading to the formation of s(2)U34. The sequence is that of tRNA-specific 2-thiouridylase MnmA from Salinispora tropica (strain ATCC BAA-916 / DSM 44818 / JCM 13857 / NBRC 105044 / CNB-440).